The primary structure comprises 321 residues: Basic peroxidase (321 aa).

The first 30 residues, 1–30 (MSYHKSSGTTLMVPLFMLLISVNYFMSCNA), serve as a signal peptide directing secretion. Gln31 carries the pyrrolidone carboxylic acid modification. Intrachain disulfides connect Cys41-Cys117, Cys74-Cys79, Cys123-Cys317, and Cys202-Cys228. The Proton acceptor role is filled by His72. Asp73, Val76, Gly78, Asp80, and Ser82 together coordinate Ca(2+). Residue Pro165 participates in substrate binding. His195 provides a ligand contact to heme b. Thr196 lines the Ca(2+) pocket. 2 N-linked (GlcNAc...) asparagine glycosylation sites follow: Asn211 and Asn221. Ca(2+)-binding residues include Asp241, Thr244, and Asp249.

Belongs to the peroxidase family. Classical plant (class III) peroxidase subfamily. The cofactor is heme b. It depends on Ca(2+) as a cofactor. N-glycosylated. As to expression, expressed in tracheary elements, roots, young and old hypocotyls, and stems in the partially glycosylated form and in roots and young hypocotyls in the fully glycosylated form. None of the isoforms is significantly expressed in leaves or cotyledons.

The protein resides in the secreted. It carries out the reaction 2 a phenolic donor + H2O2 = 2 a phenolic radical donor + 2 H2O. Removal of H(2)O(2), oxidation of toxic reductants, biosynthesis and degradation of lignin, suberization, auxin catabolism, response to environmental stresses such as wounding, pathogen attack and oxidative stress. These functions might be dependent on each isozyme/isoform in each plant tissue. Involved in the synthesis of highly polymerized lignins. This is Basic peroxidase (POD3) from Zinnia elegans (Garden zinnia).